Consider the following 462-residue polypeptide: Integrator complex subunit 12 (462 aa).

The disordered stretch occupies residues G42–P129. The segment covering I59–V86 has biased composition (polar residues). K68 participates in a covalent cross-link: Glycyl lysine isopeptide (Lys-Gly) (interchain with G-Cter in SUMO2). Basic and acidic residues predominate over residues T88–E124. S128 carries the phosphoserine modification. A PHD-type zinc finger spans residues G159–Q215. K254 is covalently cross-linked (Glycyl lysine isopeptide (Lys-Gly) (interchain with G-Cter in SUMO2)). The span at S301–Q328 shows a compositional bias: polar residues. The tract at residues S301–K462 is disordered. 2 stretches are compositionally biased toward low complexity: residues K347–V358 and G396–S437. Residues Q449–K462 show a composition bias toward basic residues.

The protein belongs to the Integrator subunit 12 family. Component of the Integrator complex, composed of core subunits INTS1, INTS2, INTS3, INTS4, INTS5, INTS6, INTS7, INTS8, INTS9/RC74, INTS10, INTS11/CPSF3L, INTS12, INTS13, INTS14 and INTS15. The core complex associates with protein phosphatase 2A subunits PPP2CA and PPP2R1A, to form the Integrator-PP2A (INTAC) complex. In terms of processing, dephosphorylated at Ser-128 by the PNUTS-PP1 complex, promoting RNA polymerase II transcription pause-release.

It is found in the nucleus. Component of the integrator complex, a multiprotein complex that terminates RNA polymerase II (Pol II) transcription in the promoter-proximal region of genes. The integrator complex provides a quality checkpoint during transcription elongation by driving premature transcription termination of transcripts that are unfavorably configured for transcriptional elongation: the complex terminates transcription by (1) catalyzing dephosphorylation of the C-terminal domain (CTD) of Pol II subunit POLR2A/RPB1 and SUPT5H/SPT5, (2) degrading the exiting nascent RNA transcript via endonuclease activity and (3) promoting the release of Pol II from bound DNA. The integrator complex is also involved in terminating the synthesis of non-coding Pol II transcripts, such as enhancer RNAs (eRNAs), small nuclear RNAs (snRNAs), telomerase RNAs and long non-coding RNAs (lncRNAs). Mediates recruitment of cytoplasmic dynein to the nuclear envelope, probably as component of the integrator complex. This chain is Integrator complex subunit 12 (INTS12), found in Macaca fascicularis (Crab-eating macaque).